Reading from the N-terminus, the 258-residue chain is Acetylglutamate kinase (258 aa).

Substrate-binding positions include 44–45 (GG), Arg66, and Asn158. ATP contacts are provided by residues 181–186 (DISSIL) and 209–211 (IIT).

This sequence belongs to the acetylglutamate kinase family. ArgB subfamily. As to quaternary structure, homodimer.

Its subcellular location is the cytoplasm. The catalysed reaction is N-acetyl-L-glutamate + ATP = N-acetyl-L-glutamyl 5-phosphate + ADP. It participates in amino-acid biosynthesis; L-arginine biosynthesis; N(2)-acetyl-L-ornithine from L-glutamate: step 2/4. In terms of biological role, catalyzes the ATP-dependent phosphorylation of N-acetyl-L-glutamate. The polypeptide is Acetylglutamate kinase (Buchnera aphidicola subsp. Schizaphis graminum (strain Sg)).